Here is a 267-residue protein sequence, read N- to C-terminus: MNKLENKVALVTSATRGIGLASAIKLAQNGAIVYMGVRRLEATQEICDKYKEEGLILKPVFFDAYNIDIYKEMIDTIIKNEGKIDILVNNFGTGRPEKDLDLVNGDEDTFFELFNYNVGSVYRLSKLIIPHMIENKGGSIVNISSVGGSIPDISRIGYGVSKSGVNNITKQIAIQYAKYGIRCNAVLPGLIATDAAMNSMPDEFRKSFLSHVPLNRIGNPEDIANSVLFFVPSEDSSYITGSILEVSGGYNLGTPQYAEFVGSKVVE.

Residues 13-18, Arg-38, 63-64, and Asn-90 each bind NADP(+); these read SATRGI and DA. The cholate site is built by Ser-145 and Tyr-158. NADP(+) contacts are provided by residues Tyr-158, Lys-162, and 191-195; that span reads IATDA. Residue Tyr-158 is the Proton acceptor of the active site.

The protein belongs to the short-chain dehydrogenases/reductases (SDR) family. Homotetramer.

It carries out the reaction cholate + NADP(+) = 3alpha,12alpha-dihydroxy-7-oxo-5beta-cholanate + NADPH + H(+). The catalysed reaction is chenodeoxycholate + NADP(+) = 7-oxolithocholate + NADPH + H(+). In terms of biological role, 7alpha-hydroxysteroid dehydrogenase that catalyzes the NADP(+)-dependent oxidation of the 7alpha-hydroxy group of 7alpha-hydroxysteroids, such as the major human bile acids cholate and chenodeoxycholate, to the corresponding 7-oxosteroids. Is thus liley involved in the metabolism of primary bile acids. The sequence is that of 7alpha-hydroxysteroid dehydrogenase from Paraclostridium sordellii (Clostridium sordellii).